A 29-amino-acid polypeptide reads, in one-letter code: Cytochrome b6-f complex subunit 8 (29 aa).

The chain crosses the membrane as a helical span at residues 3–23; it reads IITFGWVAVAAFFALSIAFVV.

The protein belongs to the PetN family. As to quaternary structure, the 4 large subunits of the cytochrome b6-f complex are cytochrome b6, subunit IV (17 kDa polypeptide, PetD), cytochrome f and the Rieske protein, while the 4 small subunits are PetG, PetL, PetM and PetN. The complex functions as a dimer.

Its subcellular location is the cellular thylakoid membrane. Functionally, component of the cytochrome b6-f complex, which mediates electron transfer between photosystem II (PSII) and photosystem I (PSI), cyclic electron flow around PSI, and state transitions. The protein is Cytochrome b6-f complex subunit 8 of Synechococcus sp. (strain JA-3-3Ab) (Cyanobacteria bacterium Yellowstone A-Prime).